The following is a 193-amino-acid chain: Rho-related GTP-binding protein RhoA-B (193 aa).

GTP contacts are provided by residues 12–19, 30–37, 59–63, 117–120, and 160–162; these read GDGACGKT, FPEVYVPT, DTAGQ, NKKD, and SAK. Residue Y34 is glycosylated ((Microbial infection) O-linked (GlcNAc) tyrosine; by Yersinia Afp18). C190 bears the Cysteine methyl ester mark. C190 carries S-geranylgeranyl cysteine lipidation. A propeptide spans 191 to 193 (removed in mature form); that stretch reads CLL.

It belongs to the small GTPase superfamily. Rho family. (Microbial infection) Glycosylated at Tyr-34 by Yersinia ruckeri toxin Afp18. Mono-O-GlcNAcylation by Afp18 inhibits RhoA activation by guanine nucleotide exchange factors and blocks RhoA signaling.

It localises to the cell membrane. In terms of biological role, regulates a signal transduction pathway linking plasma membrane receptors to the assembly of focal adhesions and actin stress fibers. This Danio rerio (Zebrafish) protein is Rho-related GTP-binding protein RhoA-B.